The following is a 538-amino-acid chain: Atos homolog protein B (538 aa).

Residues 1-18 (MRHVQAEPSPSSEPEAGP) are compositionally biased toward low complexity. Disordered regions lie at residues 1 to 114 (MRHV…LGVA) and 133 to 300 (TSSW…VLDP). Residues 227-238 (HTPPGPGPPGPC) are compositionally biased toward pro residues. Phosphoserine occurs at positions 254 and 255. The interval 348 to 430 (LLGNFEESLL…VPKVGTVQVT (83 aa)) is required for macropage invasion. The transactivation domain 1 (TAD1) stretch occupies residues 436–444 (QTVVKMFLV).

The protein belongs to the ATOS family.

The protein localises to the nucleus. In terms of biological role, transcription regulator that may syncronize transcriptional and translational programs. The sequence is that of Atos homolog protein B from Homo sapiens (Human).